An 83-amino-acid chain; its full sequence is Sec-independent protein translocase protein TatA (83 aa).

Residues 1-21 (MGSLSPWHWAILAVVVIVLFG) form a helical membrane-spanning segment. Residues 48 to 83 (NENKAEASIETPTPVQSQRVDPSAASGQDSTEARPA) form a disordered region. Over residues 57-77 (ETPTPVQSQRVDPSAASGQDS) the composition is skewed to polar residues.

This sequence belongs to the TatA/E family. In terms of assembly, the Tat system comprises two distinct complexes: a TatABC complex, containing multiple copies of TatA, TatB and TatC subunits, and a separate TatA complex, containing only TatA subunits. Substrates initially bind to the TatABC complex, which probably triggers association of the separate TatA complex to form the active translocon.

Its subcellular location is the cell membrane. Functionally, part of the twin-arginine translocation (Tat) system that transports large folded proteins containing a characteristic twin-arginine motif in their signal peptide across membranes. TatA could form the protein-conducting channel of the Tat system. The sequence is that of Sec-independent protein translocase protein TatA from Mycobacterium bovis (strain BCG / Pasteur 1173P2).